The sequence spans 298 residues: Oligodendrocyte transcription factor 2 (298 aa).

Positions 1-13 (MDSDASLVSSRPS) are enriched in polar residues. 2 disordered regions span residues 1–60 (MDSD…SAEL) and 79–102 (SSSS…MTEP). Gly residues predominate over residues 26–41 (NKGGGGGGGGGGGFTG). Residues 79-91 (SSSSSASSASSAS) are compositionally biased toward low complexity. Residues 106–160 (QLRLKINSRERKRMHDLNIAMDGLREVMPYAHGPSVRKLSKIATLLLARNYILML) enclose the bHLH domain.

Its subcellular location is the nucleus. In terms of biological role, required for oligodendrocyte and motor neuron specification in the spinal cord. This Gallus gallus (Chicken) protein is Oligodendrocyte transcription factor 2 (OLIG2).